We begin with the raw amino-acid sequence, 903 residues long: DNA mismatch repair protein MutS (903 aa).

Residues 1 to 89 form a disordered region; sequence MPRSASQPPD…DEPAWGHHSQ (89 aa). 2 stretches are compositionally biased toward low complexity: residues 20-36 and 49-62; these read APEP…SEPE and ADAA…QATA. ATP is bound at residue 719–726; sequence GPNASGKS.

This sequence belongs to the DNA mismatch repair MutS family.

Functionally, this protein is involved in the repair of mismatches in DNA. It is possible that it carries out the mismatch recognition step. This protein has a weak ATPase activity. The chain is DNA mismatch repair protein MutS from Synechococcus sp. (strain CC9605).